The chain runs to 594 residues: Protein FAM200C (594 aa).

The chain is Protein FAM200C (FAM200C) from Bos taurus (Bovine).